Here is a 1032-residue protein sequence, read N- to C-terminus: MGRESRHYRKRSASRGRSGSRSRSRSPSDKRSKRGDDRRSRSRDRDRRRERSRSRDKRRSRSRDRKRLRRSRSRERDRSRERRRSRSRDRRRSRSRSRGRRSRSSSPGSKSKKAENRSRSKEKAEGGDSSKEKKKDKDDKEDEKEKDAGNFDQNKLEEEMRKRKERVEKWREEQRKKAMENIGELKKEIEEMKQGKKWSLEDDDDDEDDPAEAEKEGNEMEDEELDPLDAYMEEVKEEVKKFNMRSVKGGAGNEKKSGPTVTKVVTVVTTKKAVVDADKKKGELMENDQDAMEYSSEEEEVDLQTALTGYQTKQRKLLEPVDHGKIEYEPFRKNFYVEVPELAKMSQEEVNVFRLEMEGITVKGKGCPKPIKSWVQCGISMKILNSLKKHGYEKPTPIQTQAIPAIMSGRDLIGIAKTGSGKTIAFLLPMFRHIMDQRSLEEGEGPIAVIMTPTRELALQITKECKKFSKTLGLRVVCVYGGTGISEQIAELKRGAEIIVCTPGRMIDMLAANSGRVTNLRRVTYVVLDEADRMFDMGFEPQVMRIVDNVRPDRQTVMFSATFPRAMEALARRILSKPIEVQVGGRSVVCSDVEQQVIVIEEEKKFLKLLELLGHYQESGSVIIFVDKQEHADGLLKDLMRASYPCMSLHGGIDQYDRDSIINDFKNGTCKLLVATSVAARGLDVKHLILVVNYSCPNHYEDYVHRAGRTGRAGNKGYAYTFITEDQARYAGDIIKALELSGTAVPPDLEKLWSDFKDQQKAEGKIIKKSSGFSGKGFKFDETEQALANERKKLQKAALGLQDSDDEDAAVDIDEQIESMFNSKKRVKDMAAPGTSSAPAPTAGNAEKLEIAKRLALRINAQKNLGIESQVDVMQQATNAILRGGPLLAPTVSAKTIAEQLAEKINAKLNYVPLEKQEEERQEGGQSESFKRYEEELEINDFPQTARWKVTSKEALQRISEYSEAAITIRGTYFPPGKEPKEGERKIYLAIESANELAVQKAKAEITRLIKEELIRLQNSYQPTNKGRYKVL.

Over residues M1 to S24 the composition is skewed to basic residues. The tract at residues M1–P227 is disordered. G2 is lipidated: N-myristoyl glycine. Residues S26 to R49 are compositionally biased toward basic and acidic residues. Composition is skewed to basic residues over residues E50–S73 and E81–R103. A compositionally biased stretch (basic and acidic residues) spans K112 to L200. Positions D152–K197 form a coiled coil. K186 participates in a covalent cross-link: Glycyl lysine isopeptide (Lys-Gly) (interchain with G-Cter in SUMO2). A Phosphoserine modification is found at S199. Acidic residues predominate over residues E201–A211. Position 263 is an N6-acetyllysine (K263). The residue at position 294 (Y294) is a Phosphotyrosine. Residues S295 and S296 each carry the phosphoserine modification. K325 participates in a covalent cross-link: Glycyl lysine isopeptide (Lys-Gly) (interchain with G-Cter in SUMO2). S346 is modified (phosphoserine). A Q motif motif is present at residues K372–T400. The region spanning I403–V581 is the Helicase ATP-binding domain. A DEAD box motif is present at residues D529–D532. A Helicase C-terminal domain is found at D592 to W753. K776 is subject to N6-acetyllysine. K779 participates in a covalent cross-link: Glycyl lysine isopeptide (Lys-Gly) (interchain with G-Cter in SUMO2). Residue S804 is modified to Phosphoserine. The residue at position 904 (K904) is an N6-acetyllysine. Glycyl lysine isopeptide (Lys-Gly) (interchain with G-Cter in SUMO2) cross-links involve residues K908 and K916. Position 929 is a phosphoserine (S929).

It belongs to the DEAD box helicase family. DDX46/PRP5 subfamily. Component of the 17S U2 SnRNP complex, a ribonucleoprotein complex that contains small nuclear RNA (snRNA) U2 and a number of specific proteins. Within the 17S U2 SnRNP complex, DDX46 is part of the SF3B subcomplex, which is required for 'A' complex assembly formed by the stable binding of U2 snRNP to the branchpoint sequence in pre-mRNA. Recruited to the 17S U2 SnRNP complex following release of DDX42; DDX42 and DDX46 bind the SF3B subcomplex in a competitive manner.

It is found in the nucleus speckle. Its subcellular location is the nucleus. The protein resides in the cajal body. It carries out the reaction ATP + H2O = ADP + phosphate + H(+). Its function is as follows. Component of the 17S U2 SnRNP complex of the spliceosome, a large ribonucleoprotein complex that removes introns from transcribed pre-mRNAs. The 17S U2 SnRNP complex (1) directly participates in early spliceosome assembly and (2) mediates recognition of the intron branch site during pre-mRNA splicing by promoting the selection of the pre-mRNA branch-site adenosine, the nucleophile for the first step of splicing. Within the 17S U2 SnRNP complex, DDX46 plays essential roles during assembly of pre-spliceosome and proofreading of the branch site. The sequence is that of Probable ATP-dependent RNA helicase DDX46 (Ddx46) from Rattus norvegicus (Rat).